The sequence spans 500 residues: L-arabinose isomerase (500 aa).

Mn(2+) is bound by residues Glu-306, Glu-333, His-350, and His-450.

This sequence belongs to the arabinose isomerase family. In terms of assembly, homohexamer. Mn(2+) is required as a cofactor.

The enzyme catalyses beta-L-arabinopyranose = L-ribulose. The protein operates within carbohydrate degradation; L-arabinose degradation via L-ribulose; D-xylulose 5-phosphate from L-arabinose (bacterial route): step 1/3. Catalyzes the conversion of L-arabinose to L-ribulose. The sequence is that of L-arabinose isomerase from Enterobacter sp. (strain 638).